A 381-amino-acid polypeptide reads, in one-letter code: Succinate--CoA ligase [ADP-forming] subunit beta (381 aa).

The 228-residue stretch at Lys9 to Lys236 folds into the ATP-grasp domain. ATP is bound by residues Lys45, Gly52 to Gly54, Glu91, Val94, and Glu99. Positions 191 and 205 each coordinate Mg(2+). Residues Asn256 and Gly313 to Thr315 contribute to the substrate site.

It belongs to the succinate/malate CoA ligase beta subunit family. In terms of assembly, heterotetramer of two alpha and two beta subunits. Mg(2+) is required as a cofactor.

The enzyme catalyses succinate + ATP + CoA = succinyl-CoA + ADP + phosphate. It catalyses the reaction GTP + succinate + CoA = succinyl-CoA + GDP + phosphate. Its pathway is carbohydrate metabolism; tricarboxylic acid cycle; succinate from succinyl-CoA (ligase route): step 1/1. In terms of biological role, succinyl-CoA synthetase functions in the citric acid cycle (TCA), coupling the hydrolysis of succinyl-CoA to the synthesis of either ATP or GTP and thus represents the only step of substrate-level phosphorylation in the TCA. The beta subunit provides nucleotide specificity of the enzyme and binds the substrate succinate, while the binding sites for coenzyme A and phosphate are found in the alpha subunit. The polypeptide is Succinate--CoA ligase [ADP-forming] subunit beta (Halorubrum lacusprofundi (strain ATCC 49239 / DSM 5036 / JCM 8891 / ACAM 34)).